A 311-amino-acid polypeptide reads, in one-letter code: Pyrimidine-specific ribonucleoside hydrolase RihA (311 aa).

The active site involves H240.

Belongs to the IUNH family. RihA subfamily.

Hydrolyzes cytidine or uridine to ribose and cytosine or uracil, respectively. The protein is Pyrimidine-specific ribonucleoside hydrolase RihA of Salmonella choleraesuis (strain SC-B67).